A 331-amino-acid polypeptide reads, in one-letter code: Ferredoxin--NADP reductase 2 (331 aa).

Residues E37, Q45, Y50, V90, F124, D286, and T327 each contribute to the FAD site.

It belongs to the ferredoxin--NADP reductase type 2 family. Homodimer. It depends on FAD as a cofactor.

It carries out the reaction 2 reduced [2Fe-2S]-[ferredoxin] + NADP(+) + H(+) = 2 oxidized [2Fe-2S]-[ferredoxin] + NADPH. In Listeria monocytogenes serotype 4b (strain F2365), this protein is Ferredoxin--NADP reductase 2.